Here is a 301-residue protein sequence, read N- to C-terminus: GTPase Era (301 aa).

The Era-type G domain maps to Tyr-7–Glu-175. The tract at residues Gly-15 to Ser-22 is G1. Gly-15–Ser-22 serves as a coordination point for GTP. The segment at Gln-41–His-45 is G2. Positions Asp-62 to Gly-65 are G3. GTP-binding positions include Asp-62 to Leu-66 and Asn-124 to Asp-127. Positions Asn-124–Asp-127 are G4. The G5 stretch occupies residues Ile-154–Ala-156. One can recognise a KH type-2 domain in the interval Leu-206–Ser-283.

It belongs to the TRAFAC class TrmE-Era-EngA-EngB-Septin-like GTPase superfamily. Era GTPase family. As to quaternary structure, monomer.

Its subcellular location is the cytoplasm. It is found in the cell inner membrane. Functionally, an essential GTPase that binds both GDP and GTP, with rapid nucleotide exchange. Plays a role in 16S rRNA processing and 30S ribosomal subunit biogenesis and possibly also in cell cycle regulation and energy metabolism. The protein is GTPase Era of Shigella flexneri.